Reading from the N-terminus, the 194-residue chain is MQVILLERIDRLGKIGDEVRVKNGFARNFLIPQGKALIANDKNRKRFEIERDAIEARNAAARDAAQTEADNLEGAIFVLIRQAGETGQLYGSVTARDVAEAAEAAGYKVDRAAVRLDKPIKAVGLSEVSVRLHAEVSVKVQVNVARSTEEAERQEKGEDIVAALQAENQAQADEQAGELAAAAAERGDMGGDEE.

The segment covering 166 to 184 has biased composition (low complexity); the sequence is AENQAQADEQAGELAAAAA. The tract at residues 166 to 194 is disordered; the sequence is AENQAQADEQAGELAAAAAERGDMGGDEE. The segment covering 185–194 has biased composition (basic and acidic residues); it reads ERGDMGGDEE.

It belongs to the bacterial ribosomal protein bL9 family.

Functionally, binds to the 23S rRNA. In Hyphomonas neptunium (strain ATCC 15444), this protein is Large ribosomal subunit protein bL9.